We begin with the raw amino-acid sequence, 678 residues long: Electrogenic aspartate/glutamate antiporter SLC25A12, mitochondrial (678 aa).

Alanine 2 carries the N-acetylalanine modification. The tract at residues alanine 2 to proline 294 is regulatory N-terminal domain. Topologically, residues alanine 2–arginine 329 are mitochondrial intermembrane. Ca(2+) contacts are provided by aspartate 65, threonine 67, aspartate 69, leucine 71, and glutamate 76. 4 EF-hand domains span residues aspartate 65–glutamate 76, alanine 86–histidine 121, proline 125–glutamine 155, and leucine 157–histidine 192. The interval leucine 295 to glutamine 310 is linker loop domain. The carrier domain stretch occupies residues tryptophan 320 to leucine 612. Solcar repeat units lie at residues alanine 324–lysine 416, valine 424–leucine 508, and valine 516–tryptophan 604. Residues phenylalanine 330 to isoleucine 347 traverse the membrane as a helical segment. Residues aspartate 348 to arginine 390 are Mitochondrial matrix-facing. The helical transmembrane segment at glycine 391 to asparagine 410 threads the bilayer. Residues aspartate 411–glycine 433 lie on the Mitochondrial intermembrane side of the membrane. Residues glycine 434–leucine 447 form a helical membrane-spanning segment. The Mitochondrial matrix segment spans residues glutamate 448 to lysine 482. Residues glycine 483–tyrosine 502 traverse the membrane as a helical segment. Residues alanine 503–leucine 521 lie on the Mitochondrial intermembrane side of the membrane. Residues leucine 522 to alanine 539 form a helical membrane-spanning segment. Residues aspartate 540–lysine 578 are Mitochondrial matrix-facing. Residues glycine 579–tyrosine 598 traverse the membrane as a helical segment. The Mitochondrial intermembrane segment spans residues glutamate 599 to glutamine 678. Positions lysine 613–alanine 675 are C-terminal domain.

This sequence belongs to the mitochondrial carrier (TC 2.A.29) family. In terms of assembly, homodimer (via N-terminus). In terms of tissue distribution, expressed predominantly in the heart and skeletal muscle, weakly in brain and kidney.

The protein resides in the mitochondrion inner membrane. The enzyme catalyses L-aspartate(in) + L-glutamate(out) + H(+)(out) = L-aspartate(out) + L-glutamate(in) + H(+)(in). It carries out the reaction 3-sulfino-L-alanine(out) + L-glutamate(in) + H(+)(in) = 3-sulfino-L-alanine(in) + L-glutamate(out) + H(+)(out). The catalysed reaction is 3-sulfino-L-alanine(out) + L-aspartate(in) = 3-sulfino-L-alanine(in) + L-aspartate(out). With respect to regulation, activated by calcium-binding in the mitochondrial intermembrane space. Inhibited by pyridoxal 5'-phosphate, bathophenathroline, mercurials, diethyl pyrocarbonate and N-ethylmaleimide. In terms of biological role, mitochondrial electrogenic aspartate/glutamate antiporter that favors efflux of aspartate and entry of glutamate and proton within the mitochondria as part of the malate-aspartate shuttle. Also mediates the uptake of L-cysteinesulfinate (3-sulfino-L-alanine) by mitochondria in exchange of L-glutamate and proton. Can also exchange L-cysteinesulfinate with aspartate in their anionic form without any proton translocation. Lacks transport activity towards L-glutamine or gamma-aminobutyric acid (GABA). This chain is Electrogenic aspartate/glutamate antiporter SLC25A12, mitochondrial, found in Homo sapiens (Human).